The following is a 264-amino-acid chain: Proliferating cell nuclear antigen (264 aa).

Residues 61 to 80 (RCDRNISMGMNLGNMAKMLK) mediate DNA binding.

Belongs to the PCNA family.

The protein localises to the nucleus. Functionally, this protein is an auxiliary protein of DNA polymerase delta and is involved in the control of eukaryotic DNA replication by increasing the polymerase's processibility during elongation of the leading strand. The polypeptide is Proliferating cell nuclear antigen (Daucus carota (Wild carrot)).